A 95-amino-acid polypeptide reads, in one-letter code: UPF0358 protein GTNG_0942 (95 aa).

It belongs to the UPF0358 family.

The protein is UPF0358 protein GTNG_0942 of Geobacillus thermodenitrificans (strain NG80-2).